We begin with the raw amino-acid sequence, 21 residues long: Venom nerve growth factor Bco12 (21 aa).

The protein belongs to the NGF-beta family. Homodimer; non-covalently linked. Post-translationally, glycosylated. In terms of tissue distribution, expressed by the venom gland.

Its subcellular location is the secreted. Functionally, nerve growth factor is important for the development and maintenance of the sympathetic and sensory nervous systems. It stimulates division and differentiation of sympathetic and embryonic sensory neurons as well as basal forebrain cholinergic neurons in the brain. Its relevance in the snake venom is not clear. However, it has been shown to inhibit metalloproteinase-dependent proteolysis of platelet glycoprotein Ib alpha, suggesting a metalloproteinase inhibition to prevent metalloprotease autodigestion and/or protection against prey proteases. Binds a lipid between the two protein chains in the homodimer. The lipid-bound form promotes histamine relase from mouse mast cells, contrary to the lipid-free form. The sequence is that of Venom nerve growth factor Bco12 from Bothrops cotiara (Cotiara).